Consider the following 772-residue polypeptide: Putative ribosomal protein S6 kinase alpha-2 (772 aa).

Residues 17 to 284 (FALLRVLGKG…VDEIKNHKFM (268 aa)) enclose the Protein kinase 1 domain. Residues 23–31 (LGKGAYGKV) and K49 contribute to the ATP site. The Proton acceptor role is filled by D145. S180, S342, and S347 each carry phosphoserine; by autocatalysis. Positions 285–353 (SSIDWDAAVK…VSPSVIFAND (69 aa)) constitute an AGC-kinase C-terminal domain. The Protein kinase 2 domain occupies 382 to 653 (KSDAGLLGKG…MQELTAHMWL (272 aa)). Residues 388-396 (LGKGAFSVV) and K411 contribute to the ATP site. D500 (proton acceptor) is an active-site residue. Residues 706–772 (RGIKRQSGDK…IRETRGSDSS (67 aa)) are disordered. At S712 the chain carries Phosphoserine; by autocatalysis. Polar residues-rich tracts occupy residues 718–727 (SGNSKNSRVT) and 739–748 (EMTSSTSRPS).

This sequence belongs to the protein kinase superfamily. AGC Ser/Thr protein kinase family. S6 kinase subfamily. Mg(2+) serves as cofactor.

It carries out the reaction L-seryl-[protein] + ATP = O-phospho-L-seryl-[protein] + ADP + H(+). It catalyses the reaction L-threonyl-[protein] + ATP = O-phospho-L-threonyl-[protein] + ADP + H(+). With respect to regulation, activated by multiple phosphorylations on threonine and serine residues. In terms of biological role, serine/threonine kinase that may play a role in mediating the mitogen- and stress-induced effects on transcription. May repress transcription via phosphorylation of 'Ser-1' of histone H2A. May phosphorylate histone H3. This is Putative ribosomal protein S6 kinase alpha-2 (rskn-2) from Caenorhabditis elegans.